Reading from the N-terminus, the 312-residue chain is Olfactory receptor 7D4 (312 aa).

Over 1–25 (MEAENLTELSKFLLLGLSDDPELQP) the chain is Extracellular. A glycan (N-linked (GlcNAc...) asparagine) is linked at Asn-5. The helical transmembrane segment at 26–46 (VLFGLFLSMYLVTVLGNLLII) threads the bilayer. Residues 47–54 (LAVSSDSH) lie on the Cytoplasmic side of the membrane. A helical transmembrane segment spans residues 55–75 (LHTPMYFFLSNLSFVDICFIS). The Extracellular portion of the chain corresponds to 76-99 (TTVPKMLVSIQARSKDISYMGCLT). Cys-97 and Cys-189 are disulfide-bonded. The chain crosses the membrane as a helical span at residues 100 to 120 (QVYFLMMFAGMDTFLLAVMAY). Over 121–139 (DRFVAICHPLHYTVIMNPC) the chain is Cytoplasmic. Residues 140-160 (LCGLLVLASWFIIFWFSLVHI) traverse the membrane as a helical segment. Residues 161 to 197 (LLMKRLTFSTGTEIPHFFCEPAQVLKVACSNTLLNNI) are Extracellular-facing. The chain crosses the membrane as a helical span at residues 198-217 (VLYVATALLGVFPVAGILFS). Topologically, residues 218 to 237 (YSQIVSSLMGMSSTKGKYKA) are cytoplasmic. Residues 238-258 (FSTCGSHLCVVSLFYGTGLGV) traverse the membrane as a helical segment. Over 259-271 (YLSSAVTHSSQSS) the chain is Extracellular. Residues 272–292 (STASVMYAMVTPMLNPFIYSL) form a helical membrane-spanning segment. The Cytoplasmic portion of the chain corresponds to 293–312 (RNKDVKGALERLLSRADSCP).

This sequence belongs to the G-protein coupled receptor 1 family. As to expression, nasal olfactory epithelium.

It localises to the cell membrane. Its function is as follows. Odorant receptor. Selectively activated by androstenone and the related odorous steroid androstadienone. The sequence is that of Olfactory receptor 7D4 (OR7D4) from Homo sapiens (Human).